Consider the following 1105-residue polypeptide: Protein phosphatase 1 regulatory subunit 26 (1105 aa).

Disordered stretches follow at residues 228 to 382, 444 to 468, 504 to 526, and 589 to 748; these read LNDK…NKLA, QSTYVIPTEPPPPPPEPQCDSDSLV, TSPELGSQSSKLSLTHKRKAKAM, and LNRG…DSDD. Residues 275–285 are compositionally biased toward basic and acidic residues; sequence LLRKHASDSKL. Residues 306-317 show a composition bias toward low complexity; that stretch reads TKTSSPSPKSTP. The segment covering 359–368 has biased composition (polar residues); the sequence is SPTSANSLTH. Positions 451–460 are enriched in pro residues; sequence TEPPPPPPEP. Over residues 504–516 the composition is skewed to polar residues; the sequence is TSPELGSQSSKLS. Over residues 602–612 the composition is skewed to low complexity; the sequence is SYSSGDKSSSL. A compositionally biased stretch (basic residues) spans 628–647; that stretch reads SKRKYKKRPKDGKSQCKKRV. Residues 686–701 are compositionally biased toward basic and acidic residues; sequence NSLEKSKKRREEKAVE. Polar residues predominate over residues 705-715; the sequence is PSCSSSPQGNK. The segment covering 733 to 742 has biased composition (basic and acidic residues); sequence RALDDAHESS.

Its subcellular location is the nucleus. It is found in the nucleolus. Its function is as follows. May inhibit phosphatase activity of protein phosphatase 1 (PP1) complexes. May positively regulate cell proliferation. This chain is Protein phosphatase 1 regulatory subunit 26 (ppp1r26), found in Xenopus laevis (African clawed frog).